Consider the following 272-residue polypeptide: HMP-PP phosphatase (272 aa).

Aspartate 8 functions as the Nucleophile in the catalytic mechanism. Residues aspartate 8, aspartate 10, and aspartate 212 each contribute to the Mg(2+) site.

Belongs to the HAD-like hydrolase superfamily. Cof family. The cofactor is Mg(2+).

The catalysed reaction is 4-amino-2-methyl-5-(diphosphooxymethyl)pyrimidine + H2O = 4-amino-2-methyl-5-(phosphooxymethyl)pyrimidine + phosphate + H(+). Functionally, catalyzes the hydrolysis of 4-amino-2-methyl-5-hydroxymethylpyrimidine pyrophosphate (HMP-PP) to 4-amino-2-methyl-5-hydroxymethylpyrimidine phosphate (HMP-P). The polypeptide is HMP-PP phosphatase (Salmonella enteritidis PT4 (strain P125109)).